The chain runs to 227 residues: Cytochrome c oxidase subunit 2 (227 aa).

Topologically, residues 1–14 (MAYPFQLGLQDATS) are mitochondrial intermembrane. A helical transmembrane segment spans residues 15-45 (PIMEELLHFHDHTLMIVFLISSLVLYIISLM). Residues 46–59 (LTTKLTHTSTMDAQ) lie on the Mitochondrial matrix side of the membrane. A helical membrane pass occupies residues 60-87 (EVETVWTILPAIILILIALPSLRILYMM). The Mitochondrial intermembrane segment spans residues 88-227 (DEINNPSLTV…YFETWSALMV (140 aa)). Cu cation contacts are provided by histidine 161, cysteine 196, glutamate 198, cysteine 200, histidine 204, and methionine 207. Glutamate 198 serves as a coordination point for Mg(2+). Tyrosine 218 bears the Phosphotyrosine mark.

It belongs to the cytochrome c oxidase subunit 2 family. As to quaternary structure, component of the cytochrome c oxidase (complex IV, CIV), a multisubunit enzyme composed of 14 subunits. The complex is composed of a catalytic core of 3 subunits MT-CO1, MT-CO2 and MT-CO3, encoded in the mitochondrial DNA, and 11 supernumerary subunits COX4I, COX5A, COX5B, COX6A, COX6B, COX6C, COX7A, COX7B, COX7C, COX8 and NDUFA4, which are encoded in the nuclear genome. The complex exists as a monomer or a dimer and forms supercomplexes (SCs) in the inner mitochondrial membrane with NADH-ubiquinone oxidoreductase (complex I, CI) and ubiquinol-cytochrome c oxidoreductase (cytochrome b-c1 complex, complex III, CIII), resulting in different assemblies (supercomplex SCI(1)III(2)IV(1) and megacomplex MCI(2)III(2)IV(2)). Found in a complex with TMEM177, COA6, COX18, COX20, SCO1 and SCO2. Interacts with TMEM177 in a COX20-dependent manner. Interacts with COX20. Interacts with COX16. The cofactor is Cu cation.

It localises to the mitochondrion inner membrane. It carries out the reaction 4 Fe(II)-[cytochrome c] + O2 + 8 H(+)(in) = 4 Fe(III)-[cytochrome c] + 2 H2O + 4 H(+)(out). Functionally, component of the cytochrome c oxidase, the last enzyme in the mitochondrial electron transport chain which drives oxidative phosphorylation. The respiratory chain contains 3 multisubunit complexes succinate dehydrogenase (complex II, CII), ubiquinol-cytochrome c oxidoreductase (cytochrome b-c1 complex, complex III, CIII) and cytochrome c oxidase (complex IV, CIV), that cooperate to transfer electrons derived from NADH and succinate to molecular oxygen, creating an electrochemical gradient over the inner membrane that drives transmembrane transport and the ATP synthase. Cytochrome c oxidase is the component of the respiratory chain that catalyzes the reduction of oxygen to water. Electrons originating from reduced cytochrome c in the intermembrane space (IMS) are transferred via the dinuclear copper A center (CU(A)) of subunit 2 and heme A of subunit 1 to the active site in subunit 1, a binuclear center (BNC) formed by heme A3 and copper B (CU(B)). The BNC reduces molecular oxygen to 2 water molecules using 4 electrons from cytochrome c in the IMS and 4 protons from the mitochondrial matrix. The polypeptide is Cytochrome c oxidase subunit 2 (MT-CO2) (Canis adustus (Side-striped jackal)).